We begin with the raw amino-acid sequence, 943 residues long: MSSKEHSPEKPWRGFYGPNLGAVIELYDQYVEDPNSVDEQTRAHFEKWGPPALEENVSSSNAKETIGADMISAVVGAVRLADYIRAKGHLVSDIQPIWKTDKNSNLLDYDRFNVTEEELKKVPVKLICKDAPPHLKNGLEAIEHLKKVYTQTMAFEFGHVQDEEERNWLRKQVESEAYADELPNKEKKALLERLTSVEGFEKFIHRTFVGQKRFSIEGLDTLVPMLDKAIREVRKEKTDHVMIGMAHRGRLNVLAHTLGKPYKAIFSEFLQAPNKLNAPSEGLGETYTGWTGDVKYHLGADRQISDDKSAQTIVSLANNPSHLEFVSPIVEGYARAAQEDRSSKGAPKQDTTRAYSILIHGDAAFPGQGVVTETLNLSRLNGYHVGGSLHIIANNNIGYTTEMHDSRSTTYASDPAKGFEIPIVHVNADDAEACVRAIKFAVEYRRKFQKDFLIDLIGYRRFGHNEGDEPAVTQPDLYAQIRKHPTVRAIYAKQLEAEQVITAKEAQKLDTDMYNYLLEEYNKVNSDKSEKKYELSPPDFIVDGLPKVKTAVEKEKLVAMNEQLLDWPSSFKPNQKLEKILKRRANAFDGEGNVDWGLAEILAFASILHDGTPVRLSGQDSERGTFAHRHFVLHDRETNETHVPLQTIKDANASFAVYNSPLTEQACVGFEYGYNVFSKETLVLWEAQFGDFVNGAQVMFDQWVSAGRAKWGQKSGLVVLLPHGYEGAGPEHSSGRVERFLSSAAENNWTVANCTSAAQYFHILRRQAKILQKNTVRPLIIMTPKSLLRNQVVASPTSAFTEGEFQPILEEPTLGHDPNAVKRIILCSGKLAIELQDYVNKNDEDWSWVHIIRVEELYPFPRRAIRERLKEFPNLEEVKWVQEEPKNMGAWTFMEPRIREILPSGVPLSYIGRTYRSSPAEGVSNAHKVEQKRIVTESLTRKN.

The protein belongs to the alpha-ketoglutarate dehydrogenase family. Homodimer. Part of the 2-oxoglutarate dehydrogenase (OGDH) complex composed of E1 (2-oxoglutarate dehydrogenase), E2 (dihydrolipoamide succinyltransferase) and E3 (dihydrolipoamide dehydrogenase); the complex contains multiple copies of the three enzymatic components (E1, E2 and E3). Requires thiamine diphosphate as cofactor.

The enzyme catalyses N(6)-[(R)-lipoyl]-L-lysyl-[protein] + 2-oxoglutarate + H(+) = N(6)-[(R)-S(8)-succinyldihydrolipoyl]-L-lysyl-[protein] + CO2. Functionally, E1 component of the 2-oxoglutarate dehydrogenase (OGDH) complex which catalyzes the decarboxylation of 2-oxoglutarate, the first step in the conversion of 2-oxoglutarate to succinyl-CoA and CO(2). The protein is 2-oxoglutarate dehydrogenase E1 component of Shouchella clausii (strain KSM-K16) (Alkalihalobacillus clausii).